The primary structure comprises 126 residues: Fluoride-specific ion channel FluC (126 aa).

The next 4 helical transmembrane spans lie at 5-25 (VLAV…LGLW), 35-55 (WGTL…MAFF), 68-88 (FAVT…LEMF), and 99-119 (ALVG…LGFL). Residues G75 and T78 each contribute to the Na(+) site.

Belongs to the fluoride channel Fluc/FEX (TC 1.A.43) family.

The protein resides in the cell inner membrane. It carries out the reaction fluoride(in) = fluoride(out). Its activity is regulated as follows. Na(+) is not transported, but it plays an essential structural role and its presence is essential for fluoride channel function. Fluoride-specific ion channel. Important for reducing fluoride concentration in the cell, thus reducing its toxicity. This is Fluoride-specific ion channel FluC from Marinobacter nauticus (strain ATCC 700491 / DSM 11845 / VT8) (Marinobacter aquaeolei).